We begin with the raw amino-acid sequence, 334 residues long: MTPIDAKRPLQLNDQGQLRHFLSLDGLPRELLTEILDTADSFLEVGARAVKKVPLLRGKTVCNVFFENSTRTRTTFELAAQRLSADVISLNVSTSSTSKGETLFDTLRNLEAMAADMFVVRHSDSGAAHFIAEHVCPDVAVINGGDGRHAHPTQGMLDMLTIRRHKGSFENLSVAIVGDILHSRVARSDMLALKALGCPDIRVIGPKTLIPIGIEQYGVKVYTDLAEGLKDVDVVIMLRLQRERMAGGLLPSEGEFYRLFGLTTARLAGAKPDAIVMHPGPINRGVEIESAVADGKHSVILNQVTYGIAVRMAVLSMAMSGQNAQRQFDQENAQ.

Residues Arg-71 and Thr-72 each contribute to the carbamoyl phosphate site. Lys-99 contributes to the L-aspartate binding site. Positions 121, 151, and 154 each coordinate carbamoyl phosphate. Residues Arg-184 and Arg-239 each coordinate L-aspartate. Carbamoyl phosphate is bound by residues Gly-280 and Pro-281.

It belongs to the aspartate/ornithine carbamoyltransferase superfamily. ATCase family. Heterododecamer (2C3:3R2) of six catalytic PyrB chains organized as two trimers (C3), and six regulatory PyrI chains organized as three dimers (R2).

It carries out the reaction carbamoyl phosphate + L-aspartate = N-carbamoyl-L-aspartate + phosphate + H(+). It functions in the pathway pyrimidine metabolism; UMP biosynthesis via de novo pathway; (S)-dihydroorotate from bicarbonate: step 2/3. Its function is as follows. Catalyzes the condensation of carbamoyl phosphate and aspartate to form carbamoyl aspartate and inorganic phosphate, the committed step in the de novo pyrimidine nucleotide biosynthesis pathway. This chain is Aspartate carbamoyltransferase catalytic subunit, found in Pseudomonas putida (strain GB-1).